A 121-amino-acid polypeptide reads, in one-letter code: Movement protein TGBp3 (121 aa).

The segment at 1–40 (MHYPTEADTSTGPNPSATSAPVRPRHVTPSLSPSSSSSPS) is disordered. The Lumenal portion of the chain corresponds to 1-43 (MHYPTEADTSTGPNPSATSAPVRPRHVTPSLSPSSSSSPSPDS). Residues 7 to 19 (ADTSTGPNPSATS) are compositionally biased toward polar residues. A compositionally biased stretch (low complexity) spans 29–40 (PSLSPSSSSSPS). A helical membrane pass occupies residues 44 to 64 (FYYFLAAAVILTAALAAALLT). At 65–121 (PNPGCTIVITGHTTIIQGSCPIPPQLVLAAHPRGLSLEQYLKFTNTLPDGSQHRSHR) the chain is on the cytoplasmic side.

The protein belongs to the Tymovirales TGBp3 protein family.

The protein resides in the host endoplasmic reticulum membrane. Functionally, plays a role in viral cell-to-cell propagation, by facilitating genome transport to neighboring plant cells through plasmosdesmata. May induce the formation of granular vesicles derived from the Endoplasmic reticulum, which align on actin filaments. The polypeptide is Movement protein TGBp3 (Plantago asiatica (P1AMV)).